A 206-amino-acid polypeptide reads, in one-letter code: Guanylate kinase (206 aa).

The Guanylate kinase-like domain maps to 6-184; that stretch reads GTLYIISAPS…ALGDLKAIFR (179 aa). ATP is bound at residue 13–20; the sequence is APSGAGKS.

This sequence belongs to the guanylate kinase family.

It localises to the cytoplasm. It carries out the reaction GMP + ATP = GDP + ADP. Functionally, essential for recycling GMP and indirectly, cGMP. The chain is Guanylate kinase from Pseudomonas fluorescens (strain ATCC BAA-477 / NRRL B-23932 / Pf-5).